The primary structure comprises 269 residues: tRNA pseudouridine synthase A (269 aa).

Aspartate 51 (nucleophile) is an active-site residue. Tyrosine 109 contributes to the substrate binding site.

It belongs to the tRNA pseudouridine synthase TruA family. Homodimer.

It carries out the reaction uridine(38/39/40) in tRNA = pseudouridine(38/39/40) in tRNA. Its function is as follows. Formation of pseudouridine at positions 38, 39 and 40 in the anticodon stem and loop of transfer RNAs. The polypeptide is tRNA pseudouridine synthase A (Haemophilus influenzae (strain 86-028NP)).